The chain runs to 287 residues: MAGAKEIRSKIASVQNTQKITKAMEMVAASKMRKSQDRMAASRPYAETIRNVIGHLALGNLEYKHPYLEERDVKRVGYLVVSTDRGLCGGLNINLFKKLLADMKSWSDKGVETDLALIGSKAVSFFGSVGGNIVAQVTGMGDNPSVSELIGPVKVMLQAYDEGRLDKLYIVSNKFINTMSQEPLVVQVLPLPPSDDGELKKKSWDYLYEPDPKSLLDTLLRRYVESQVYQGVVENLASEQAARMVAMKAATDNGGSLIKELQLVYNKARQASITQELTEIVGGASAV.

This sequence belongs to the ATPase gamma chain family. In terms of assembly, F-type ATPases have 2 components, CF(1) - the catalytic core - and CF(0) - the membrane proton channel. CF(1) has five subunits: alpha(3), beta(3), gamma(1), delta(1), epsilon(1). CF(0) has three main subunits: a, b and c.

It localises to the cell inner membrane. Produces ATP from ADP in the presence of a proton gradient across the membrane. The gamma chain is believed to be important in regulating ATPase activity and the flow of protons through the CF(0) complex. In Pectobacterium carotovorum subsp. carotovorum (strain PC1), this protein is ATP synthase gamma chain.